A 96-amino-acid chain; its full sequence is Large ribosomal subunit protein uL23 (96 aa).

It belongs to the universal ribosomal protein uL23 family. Part of the 50S ribosomal subunit. Contacts protein L29, and trigger factor when it is bound to the ribosome.

In terms of biological role, one of the early assembly proteins it binds 23S rRNA. One of the proteins that surrounds the polypeptide exit tunnel on the outside of the ribosome. Forms the main docking site for trigger factor binding to the ribosome. The polypeptide is Large ribosomal subunit protein uL23 (Endomicrobium trichonymphae).